The following is a 459-amino-acid chain: Asparagine--tRNA ligase (459 aa).

This sequence belongs to the class-II aminoacyl-tRNA synthetase family. In terms of assembly, homodimer.

The protein resides in the cytoplasm. It catalyses the reaction tRNA(Asn) + L-asparagine + ATP = L-asparaginyl-tRNA(Asn) + AMP + diphosphate + H(+). This is Asparagine--tRNA ligase from Pelobacter propionicus (strain DSM 2379 / NBRC 103807 / OttBd1).